Reading from the N-terminus, the 308-residue chain is Protein translocase subunit SecF (308 aa).

6 consecutive transmembrane segments (helical) span residues 10–30 (LFFA…AIFG), 129–149 (LAVS…FRGV), 160–180 (IIAM…GGVL), 181–201 (FGWQ…GFSV), 241–261 (TQLM…GITL), and 264–284 (FAII…FIAA).

It belongs to the SecD/SecF family. SecF subfamily. Forms a complex with SecD. Part of the essential Sec protein translocation apparatus which comprises SecA, SecYEG and auxiliary proteins SecDF. Other proteins may also be involved.

It localises to the cell membrane. Functionally, part of the Sec protein translocase complex. Interacts with the SecYEG preprotein conducting channel. SecDF uses the proton motive force (PMF) to complete protein translocation after the ATP-dependent function of SecA. The sequence is that of Protein translocase subunit SecF from Anaerolinea thermophila (strain DSM 14523 / JCM 11388 / NBRC 100420 / UNI-1).